Reading from the N-terminus, the 498-residue chain is Calcitonin receptor (498 aa).

Positions 1 to 29 (MRFTLTRWCLTLFIFLNRPLPVLPDSADG) are cleaved as a signal peptide. Residues 30–147 (AHTPTLEPEP…FTPDKLQNAY (118 aa)) are Extracellular-facing. 3 disulfides stabilise this stretch: Cys-56–Cys-82, Cys-73–Cys-113, and Cys-96–Cys-135. 3 N-linked (GlcNAc...) asparagine glycosylation sites follow: Asn-74, Asn-126, and Asn-131. A helical transmembrane segment spans residues 148 to 170 (ILYYLAIVGHSLSILTLLISLGI). Topologically, residues 171 to 198 (FMFLRYFNLLAPFNALLYPTRSISCQRV) are cytoplasmic. Residues 199-219 (TLHKNMFLTYVLNSIIIIVHL) traverse the membrane as a helical segment. Residues 220–236 (VVIVPNGELVKRDPPIC) are Extracellular-facing. An intrachain disulfide couples Cys-236 to Cys-306. The helical transmembrane segment at 237–259 (KVLHFFHQYMMSCNYFWMLCEGV) threads the bilayer. Residues 260–276 (YLHTLIVVSVFAEGQRL) are Cytoplasmic-facing. A helical transmembrane segment spans residues 277–297 (WWYHVLGWGFPLIPTTAHAIT). The Extracellular segment spans residues 298–313 (RAVLFNDNCWLSVDTN). Residues 314 to 337 (LLYIIHGPVMAALVVNFFFLLNIL) traverse the membrane as a helical segment. Over 338–357 (RVLVKKLKESQEAESHMYLK) the chain is Cytoplasmic. Residues 358-376 (AVRATLILVPLLGVQFVVL) traverse the membrane as a helical segment. The Extracellular segment spans residues 377–384 (PWRPSTPL). A helical membrane pass occupies residues 385-411 (LGKIYDYVVHSLIHFQGFFVAIIYCFC). Topologically, residues 412–498 (NHEVQGALKR…MEVLEQETSA (87 aa)) are cytoplasmic.

It belongs to the G-protein coupled receptor 2 family. Heterodimer of CALCR and RAMP1, RAMP2 or RAMP3; the receptor complexes function as AMYR1, AMYR2 and AMYR3 receptors, respectively, and respond to amylin/IAPP, calcitonin/CT and CGRP1 ligands. Interacts with GPRASP2.

The protein localises to the cell membrane. Functionally, g protein-coupled receptor activated by ligand peptides amylin (IAPP), calcitonin (CT/CALCA) and calcitonin gene-related peptide type 1 (CGRP1/CALCA). CALCR interacts with receptor-activity-modifying proteins RAMP1, 2 and 3 to form receptor complexes AMYR1, 2 and 3, respectively. IAPP, CT and CGRP1 activate CALCR and AMYRs with distinct modes of receptor activation resulting in specific phenotypes. Ligand binding causes a conformation change that triggers signaling via guanine nucleotide-binding proteins (G proteins) and modulates the activity of downstream effectors. Activates cAMP-dependent pathway. The chain is Calcitonin receptor from Sus scrofa (Pig).